Consider the following 405-residue polypeptide: BRCA1-A complex subunit Abraxas 1 (405 aa).

Residues 7 to 154 (LGVLSGFVLG…CTHCLEHGLY (148 aa)) enclose the MPN domain. Position 48 is a phosphoserine (serine 48). Positions 208-262 (SLKEVRKINEMYAAIQEELKTICQKVEQSEREVEKLLMDVNRLKEVRKKQQAQAK) form a coiled coil. The interval 333-405 (ASPAPAAPLS…DTDYPRSPTF (73 aa)) is disordered. Serine 382, serine 383, serine 392, and serine 402 each carry phosphoserine. Residues 386 to 397 (IDTEVGSPEDDT) show a composition bias toward acidic residues. Positions 402 to 405 (SPTF) match the pSXXF motif motif.

The protein belongs to the FAM175 family. Abraxas subfamily. As to quaternary structure, component of the ARISC complex, at least composed of UIMC1/RAP80, ABRAXAS1, BRCC3/BRCC36, BABAM2 and BABAM1/NBA1. Component of the BRCA1-A complex, at least composed of the BRCA1, BARD1, UIMC1/RAP80, ABRAXAS1, BRCC3/BRCC36, BABAM2 and BABAM1/NBA1. In the complex, interacts directly with UIMC1/RAP80, BRCC3/BRCC36 and BABAM2. Homodimer. Interacts directly (when phosphorylated at Ser-402) with BRCA1. The phosphorylated homodimer can interact directly with two BRCA1 chains, giving rise to a heterotetramer. Binds polyubiquitin. Post-translationally, phosphorylation of Ser-402 of the pSXXF motif by ATM or ATR constitutes a specific recognition motif for the BRCT domain of BRCA1.

Its subcellular location is the nucleus. Its function is as follows. Involved in DNA damage response and double-strand break (DSB) repair. Component of the BRCA1-A complex, acting as a central scaffold protein that assembles the various components of the complex and mediates the recruitment of BRCA1. The BRCA1-A complex specifically recognizes 'Lys-63'-linked ubiquitinated histones H2A and H2AX at DNA lesion sites, leading to target the BRCA1-BARD1 heterodimer to sites of DNA damage at DSBs. This complex also possesses deubiquitinase activity that specifically removes 'Lys-63'-linked ubiquitin on histones H2A and H2AX. This Rattus norvegicus (Rat) protein is BRCA1-A complex subunit Abraxas 1.